We begin with the raw amino-acid sequence, 332 residues long: tRNA dimethylallyltransferase (332 aa).

14–21 (GPTASGKT) serves as a coordination point for ATP. A substrate-binding site is contributed by 16–21 (TASGKT). Residues 39–42 (DSMQ) are interaction with substrate tRNA. A disordered region spans residues 312–332 (NKRSSNHDCKRKHPRPSTREL). Over residues 320–332 (CKRKHPRPSTREL) the composition is skewed to basic residues.

Belongs to the IPP transferase family. Monomer. The cofactor is Mg(2+).

It carries out the reaction adenosine(37) in tRNA + dimethylallyl diphosphate = N(6)-dimethylallyladenosine(37) in tRNA + diphosphate. Its function is as follows. Catalyzes the transfer of a dimethylallyl group onto the adenine at position 37 in tRNAs that read codons beginning with uridine, leading to the formation of N6-(dimethylallyl)adenosine (i(6)A). The protein is tRNA dimethylallyltransferase of Staphylococcus epidermidis (strain ATCC 35984 / DSM 28319 / BCRC 17069 / CCUG 31568 / BM 3577 / RP62A).